We begin with the raw amino-acid sequence, 562 residues long: Dihydroxy-acid dehydratase (562 aa).

Aspartate 80 serves as a coordination point for Mg(2+). [2Fe-2S] cluster is bound at residue cysteine 121. Mg(2+) contacts are provided by aspartate 122 and lysine 123. The residue at position 123 (lysine 123) is an N6-carboxylysine. [2Fe-2S] cluster is bound at residue cysteine 194. Residue glutamate 446 participates in Mg(2+) binding. Serine 472 acts as the Proton acceptor in catalysis.

Belongs to the IlvD/Edd family. As to quaternary structure, homodimer. [2Fe-2S] cluster is required as a cofactor. Requires Mg(2+) as cofactor.

It carries out the reaction (2R)-2,3-dihydroxy-3-methylbutanoate = 3-methyl-2-oxobutanoate + H2O. The enzyme catalyses (2R,3R)-2,3-dihydroxy-3-methylpentanoate = (S)-3-methyl-2-oxopentanoate + H2O. The protein operates within amino-acid biosynthesis; L-isoleucine biosynthesis; L-isoleucine from 2-oxobutanoate: step 3/4. It functions in the pathway amino-acid biosynthesis; L-valine biosynthesis; L-valine from pyruvate: step 3/4. Functionally, functions in the biosynthesis of branched-chain amino acids. Catalyzes the dehydration of (2R,3R)-2,3-dihydroxy-3-methylpentanoate (2,3-dihydroxy-3-methylvalerate) into 2-oxo-3-methylpentanoate (2-oxo-3-methylvalerate) and of (2R)-2,3-dihydroxy-3-methylbutanoate (2,3-dihydroxyisovalerate) into 2-oxo-3-methylbutanoate (2-oxoisovalerate), the penultimate precursor to L-isoleucine and L-valine, respectively. In Staphylococcus aureus (strain COL), this protein is Dihydroxy-acid dehydratase.